The sequence spans 423 residues: Glutamate-1-semialdehyde 2,1-aminomutase (423 aa).

Residue Lys-266 is modified to N6-(pyridoxal phosphate)lysine.

The protein belongs to the class-III pyridoxal-phosphate-dependent aminotransferase family. HemL subfamily. As to quaternary structure, homodimer. It depends on pyridoxal 5'-phosphate as a cofactor.

The protein resides in the cytoplasm. It catalyses the reaction (S)-4-amino-5-oxopentanoate = 5-aminolevulinate. Its pathway is porphyrin-containing compound metabolism; protoporphyrin-IX biosynthesis; 5-aminolevulinate from L-glutamyl-tRNA(Glu): step 2/2. The chain is Glutamate-1-semialdehyde 2,1-aminomutase from Desulfovibrio desulfuricans (strain ATCC 27774 / DSM 6949 / MB).